A 347-amino-acid polypeptide reads, in one-letter code: NADH-ubiquinone oxidoreductase chain 2 (347 aa).

11 consecutive transmembrane segments (helical) span residues 3-23, 25-45, 60-80, 96-116, 122-142, 153-173, 178-198, 200-220, 237-257, 274-294, and 323-343; these read PPIL…VLTS, HWLL…PILM, FLTQ…NLMF, GLVT…FWVP, ISLS…LSIL, LLIT…LNQT, ILAY…TYNP, LMIL…MLFM, LPLM…LPPL, DMII…YFYM, and IILL…TPMM.

It belongs to the complex I subunit 2 family. As to quaternary structure, core subunit of respiratory chain NADH dehydrogenase (Complex I) which is composed of 45 different subunits. Interacts with TMEM242.

It is found in the mitochondrion inner membrane. The enzyme catalyses a ubiquinone + NADH + 5 H(+)(in) = a ubiquinol + NAD(+) + 4 H(+)(out). Its function is as follows. Core subunit of the mitochondrial membrane respiratory chain NADH dehydrogenase (Complex I) which catalyzes electron transfer from NADH through the respiratory chain, using ubiquinone as an electron acceptor. Essential for the catalytic activity and assembly of complex I. The polypeptide is NADH-ubiquinone oxidoreductase chain 2 (Halichoerus grypus (Gray seal)).